A 388-amino-acid polypeptide reads, in one-letter code: Zinc finger C2H2 protein ECU10_0150 (388 aa).

A C2H2-type zinc finger spans residues 299-322 (YKCGFCGKAFESEKFIFNHFNNKH).

The sequence is that of Zinc finger C2H2 protein ECU10_0150 from Encephalitozoon cuniculi (strain GB-M1) (Microsporidian parasite).